We begin with the raw amino-acid sequence, 350 residues long: Anthranilate phosphoribosyltransferase (350 aa).

Residues G94, 97–98 (GD), T102, 104–107 (NIST), 122–130 (KHGNRSVSS), and S134 contribute to the 5-phospho-alpha-D-ribose 1-diphosphate site. Residue G94 participates in anthranilate binding. S106 contacts Mg(2+). An anthranilate-binding site is contributed by N125. R180 lines the anthranilate pocket. Mg(2+)-binding residues include D239 and E240.

Belongs to the anthranilate phosphoribosyltransferase family. As to quaternary structure, homodimer. Mg(2+) is required as a cofactor.

The enzyme catalyses N-(5-phospho-beta-D-ribosyl)anthranilate + diphosphate = 5-phospho-alpha-D-ribose 1-diphosphate + anthranilate. Its pathway is amino-acid biosynthesis; L-tryptophan biosynthesis; L-tryptophan from chorismate: step 2/5. Functionally, catalyzes the transfer of the phosphoribosyl group of 5-phosphorylribose-1-pyrophosphate (PRPP) to anthranilate to yield N-(5'-phosphoribosyl)-anthranilate (PRA). The sequence is that of Anthranilate phosphoribosyltransferase from Geotalea daltonii (strain DSM 22248 / JCM 15807 / FRC-32) (Geobacter daltonii).